A 69-amino-acid polypeptide reads, in one-letter code: Large ribosomal subunit protein bL28 (69 aa).

Belongs to the bacterial ribosomal protein bL28 family.

The chain is Large ribosomal subunit protein bL28 from Oleidesulfovibrio alaskensis (strain ATCC BAA-1058 / DSM 17464 / G20) (Desulfovibrio alaskensis).